We begin with the raw amino-acid sequence, 430 residues long: Serine--tRNA ligase (430 aa).

237 to 239 (TAE) contacts L-serine. 268–270 (RSE) lines the ATP pocket. An L-serine-binding site is contributed by glutamate 291. Position 355–358 (355–358 (EISS)) interacts with ATP. Serine 391 lines the L-serine pocket.

The protein belongs to the class-II aminoacyl-tRNA synthetase family. Type-1 seryl-tRNA synthetase subfamily. In terms of assembly, homodimer. The tRNA molecule binds across the dimer.

It localises to the cytoplasm. The enzyme catalyses tRNA(Ser) + L-serine + ATP = L-seryl-tRNA(Ser) + AMP + diphosphate + H(+). It catalyses the reaction tRNA(Sec) + L-serine + ATP = L-seryl-tRNA(Sec) + AMP + diphosphate + H(+). It functions in the pathway aminoacyl-tRNA biosynthesis; selenocysteinyl-tRNA(Sec) biosynthesis; L-seryl-tRNA(Sec) from L-serine and tRNA(Sec): step 1/1. In terms of biological role, catalyzes the attachment of serine to tRNA(Ser). Is also able to aminoacylate tRNA(Sec) with serine, to form the misacylated tRNA L-seryl-tRNA(Sec), which will be further converted into selenocysteinyl-tRNA(Sec). This is Serine--tRNA ligase from Salmonella heidelberg (strain SL476).